A 345-amino-acid polypeptide reads, in one-letter code: Anthranilate phosphoribosyltransferase (345 aa).

Residues G84, 87–88 (GD), T92, 94–97 (NIST), 112–120 (KHGGRSVSS), and S124 contribute to the 5-phospho-alpha-D-ribose 1-diphosphate site. Position 84 (G84) interacts with anthranilate. S96 contributes to the Mg(2+) binding site. An anthranilate-binding site is contributed by R170. Mg(2+)-binding residues include D229 and E230.

It belongs to the anthranilate phosphoribosyltransferase family. In terms of assembly, homodimer. It depends on Mg(2+) as a cofactor.

The catalysed reaction is N-(5-phospho-beta-D-ribosyl)anthranilate + diphosphate = 5-phospho-alpha-D-ribose 1-diphosphate + anthranilate. Its pathway is amino-acid biosynthesis; L-tryptophan biosynthesis; L-tryptophan from chorismate: step 2/5. Its function is as follows. Catalyzes the transfer of the phosphoribosyl group of 5-phosphorylribose-1-pyrophosphate (PRPP) to anthranilate to yield N-(5'-phosphoribosyl)-anthranilate (PRA). In Leptothrix cholodnii (strain ATCC 51168 / LMG 8142 / SP-6) (Leptothrix discophora (strain SP-6)), this protein is Anthranilate phosphoribosyltransferase.